A 700-amino-acid chain; its full sequence is ABC transporter B family member 26, chloroplastic (700 aa).

A chloroplast-targeting transit peptide spans 1-59 (MAQQVLGCTSRPIRVSLHRCSVITTSDTIRRKNLRFVRNPRLSFSLQSSTRNYRLPSIN). 3 helical membrane passes run 137–157 (WVIFAAFSTLIVAALSEITIP), 182–202 (LVTLCVTSGICSGIRGCFFGI), and 268–288 (LIYLLILSWPLGLCTLVICCI). One can recognise an ABC transmembrane type-1 domain in the interval 139-421 (IFAAFSTLIV…VGDNLSSLMQ (283 aa)). Residues 455 to 694 (IEFVDVSFSY…DGLYARLTKR (240 aa)) form the ABC transporter domain. 490-497 (GLSGSGKS) contributes to the ATP binding site.

This sequence belongs to the ABC transporter superfamily. ABCB family. Multidrug resistance exporter (TC 3.A.1.201) subfamily.

It is found in the plastid. It localises to the chloroplast membrane. This chain is ABC transporter B family member 26, chloroplastic (ABCB26), found in Arabidopsis thaliana (Mouse-ear cress).